The sequence spans 2729 residues: Protein NO VEIN (2729 aa).

The segment at 1 to 27 (MQGNHDGSWSLHPSTNNGSGRANGNIN) is disordered. 2 consecutive short sequence motifs (nuclear localization signal) follow at residues 194 to 201 (KRKVDVLR) and 473 to 480 (MKRLGGSN). Disordered stretches follow at residues 477–517 (GGSN…IPKL) and 2482–2515 (LPSS…DVTE). Basic and acidic residues-rich tracts occupy residues 488 to 497 (RNHEKSDSSK) and 2496 to 2515 (NTDD…DVTE).

In terms of tissue distribution, specifically expressed in developing embryos, leaf primordia, and shoot and root apical meristems.

Its subcellular location is the nucleus. In terms of biological role, essential protein required for cell fate determination during embryogenesis. Mediates auxin-dependent coordinated cell-fate specification and patterning in embryos (e.g. cotyledon outgrowth and separation), shoots and roots (e.g. leaf vascular development, cellular patterning and stem cell maintenance in the meristems). Required for provascular PIN1 expression and region-specific expression of PIN7 in leaf primordia, cell type-specific expression of PIN3, PIN4, and PIN7 in the root, and PIN2 polarity in the root cortex. The protein is Protein NO VEIN of Arabidopsis thaliana (Mouse-ear cress).